Reading from the N-terminus, the 206-residue chain is Adenylyl-sulfate kinase (206 aa).

36-43 is an ATP binding site; that stretch reads GLSGSGKS. The active-site Phosphoserine intermediate is the S110.

This sequence belongs to the APS kinase family.

It carries out the reaction adenosine 5'-phosphosulfate + ATP = 3'-phosphoadenylyl sulfate + ADP + H(+). The protein operates within sulfur metabolism; hydrogen sulfide biosynthesis; sulfite from sulfate: step 2/3. In terms of biological role, catalyzes the synthesis of activated sulfate. This Buchnera aphidicola subsp. Acyrthosiphon pisum (strain APS) (Acyrthosiphon pisum symbiotic bacterium) protein is Adenylyl-sulfate kinase (cysC).